The following is a 106-amino-acid chain: Thioredoxin-2 (106 aa).

Residues methionine 1–isoleucine 106 enclose the Thioredoxin domain. Active-site nucleophile residues include cysteine 32 and cysteine 35. A disulfide bridge links cysteine 32 with cysteine 35.

The protein belongs to the thioredoxin family. As to quaternary structure, monomer.

In terms of biological role, participates in various redox reactions through the reversible oxidation of its active center dithiol to a disulfide and catalyzes dithiol-disulfide exchange reactions. As a reducing substrate of peroxiredoxin 1, thioredoxin 2 is preferred over thioredoxin 1. The protein is Thioredoxin-2 of Drosophila melanogaster (Fruit fly).